We begin with the raw amino-acid sequence, 490 residues long: Capsid protein (490 aa).

Residues 79 to 143 (GETSEEESDS…TQPKTIPGQK (65 aa)) are disordered. Over residues 81-94 (TSEEESDSGEEPEF) the composition is skewed to acidic residues. Positions 95–111 (EQVRMDRTGGTEIPKEE) are enriched in basic and acidic residues. Residues 122–125 (RKRK) carry the Nuclear localization signal motif. A CCHC-type zinc finger spans residues 411-428 (CRCWICNIEGHYANECPN). The segment at 464–490 (YKEEEEETSTEEDDGSSTSEDSDSESD) is disordered. Residues 465-490 (KEEEEETSTEEDDGSSTSEDSDSESD) are compositionally biased toward acidic residues.

The protein belongs to the caulimoviridae capsid protein family. As to quaternary structure, interacts (via nuclear localization signal) with host importin alpha.

Its subcellular location is the virion. The protein localises to the host nucleus. Its function is as follows. Self assembles to form an icosahedral capsid, about 50 nm in diameter, nm, composed of 420 subunits of the viral capsid protein. The capsid encapsulates the genomic dsDNA. Following virus entry into host cell, provides nuclear import of the viral genome. Virus particles do not enter the nucleus, but dock at the nuclear membrane through the interaction with host importins. This chain is Capsid protein, found in Arabidopsis thaliana (Mouse-ear cress).